We begin with the raw amino-acid sequence, 114 residues long: Protein D2 (114 aa).

This sequence belongs to the phosphatidylethanolamine-binding protein family.

The sequence is that of Protein D2 (D2) from Onchocerca volvulus.